The following is a 231-amino-acid chain: NADH-ubiquinone oxidoreductase chain 4 (231 aa).

Transmembrane regions (helical) follow at residues 1 to 21 (PIAG…YGMI), 34 to 54 (MFIP…LTCL), 62 to 82 (LIAY…SIQT), 86 to 106 (LSGA…LFCL), 118 to 138 (ILIL…WWLL), 169 to 189 (TIIL…HIFL), and 211 to 231 (LLMT…ELVM).

This sequence belongs to the complex I subunit 4 family.

It localises to the mitochondrion membrane. It catalyses the reaction a ubiquinone + NADH + 5 H(+)(in) = a ubiquinol + NAD(+) + 4 H(+)(out). In terms of biological role, core subunit of the mitochondrial membrane respiratory chain NADH dehydrogenase (Complex I) that is believed to belong to the minimal assembly required for catalysis. Complex I functions in the transfer of electrons from NADH to the respiratory chain. The immediate electron acceptor for the enzyme is believed to be ubiquinone. The protein is NADH-ubiquinone oxidoreductase chain 4 (MT-ND4) of Causus rhombeatus (Rhombic night adder).